We begin with the raw amino-acid sequence, 76 residues long: Small ribosomal subunit protein bS18 (76 aa).

This sequence belongs to the bacterial ribosomal protein bS18 family. In terms of assembly, part of the 30S ribosomal subunit. Forms a tight heterodimer with protein bS6.

Binds as a heterodimer with protein bS6 to the central domain of the 16S rRNA, where it helps stabilize the platform of the 30S subunit. The sequence is that of Small ribosomal subunit protein bS18 from Nitrosomonas eutropha (strain DSM 101675 / C91 / Nm57).